The sequence spans 319 residues: ATP-dependent 6-phosphofructokinase (319 aa).

Position 11 (Gly-11) interacts with ATP. 21 to 25 is an ADP binding site; it reads RAVVR. Residues 72–73 and 102–105 each bind ATP; these read RY and GDGS. A Mg(2+)-binding site is contributed by Asp-103. 125–127 contributes to the substrate binding site; that stretch reads TID. Asp-127 (proton acceptor) is an active-site residue. Position 154 (Arg-154) interacts with ADP. Residues Arg-162 and 169 to 171 contribute to the substrate site; that span reads MGR. ADP contacts are provided by residues 185-187, Arg-211, and 213-215; these read GAE and KKH. Residues Glu-222, Arg-243, and 249–252 contribute to the substrate site; that span reads HVQR.

It belongs to the phosphofructokinase type A (PFKA) family. ATP-dependent PFK group I subfamily. Prokaryotic clade 'B1' sub-subfamily. As to quaternary structure, homotetramer. Mg(2+) is required as a cofactor.

The protein localises to the cytoplasm. It carries out the reaction beta-D-fructose 6-phosphate + ATP = beta-D-fructose 1,6-bisphosphate + ADP + H(+). It participates in carbohydrate degradation; glycolysis; D-glyceraldehyde 3-phosphate and glycerone phosphate from D-glucose: step 3/4. Allosterically activated by ADP and other diphosphonucleosides, and allosterically inhibited by phosphoenolpyruvate. Catalyzes the phosphorylation of D-fructose 6-phosphate to fructose 1,6-bisphosphate by ATP, the first committing step of glycolysis. This Listeria monocytogenes serotype 4b (strain CLIP80459) protein is ATP-dependent 6-phosphofructokinase.